We begin with the raw amino-acid sequence, 218 residues long: Oxygen regulatory protein NreC (218 aa).

Positions 2 to 119 (KIVIADDHAV…QLILAVRTVY (118 aa)) constitute a Response regulatory domain. Aspartate 53 bears the 4-aspartylphosphate mark. In terms of domain architecture, HTH luxR-type spans 149–214 (SSDPFKILSK…ELVEYALKKK (66 aa)). Positions 173 to 192 (NKDIAEKLFVSVKTVEAHKT) form a DNA-binding region, H-T-H motif.

Phosphorylated by NreB.

The protein resides in the cytoplasm. In terms of biological role, member of the two-component regulatory system NreB/NreC involved in the control of dissimilatory nitrate/nitrite reduction in response to oxygen. Phosphorylated NreC binds to a GC-rich palindromic sequence at the promoters of the nitrate (narGHJI) and nitrite (nir) reductase operons, as well as the putative nitrate transporter gene narT, and activates their expression. The protein is Oxygen regulatory protein NreC (nreC) of Staphylococcus epidermidis (strain ATCC 12228 / FDA PCI 1200).